Reading from the N-terminus, the 481-residue chain is Protein nucleotidyltransferase YdiU (481 aa).

The ATP site is built by glycine 85, glycine 87, arginine 88, lysine 108, aspartate 120, glycine 121, arginine 172, and arginine 179. Aspartate 248 acts as the Proton acceptor in catalysis. Mg(2+) contacts are provided by asparagine 249 and aspartate 258. ATP is bound at residue aspartate 258.

It belongs to the SELO family. Requires Mg(2+) as cofactor. The cofactor is Mn(2+).

It catalyses the reaction L-seryl-[protein] + ATP = 3-O-(5'-adenylyl)-L-seryl-[protein] + diphosphate. It carries out the reaction L-threonyl-[protein] + ATP = 3-O-(5'-adenylyl)-L-threonyl-[protein] + diphosphate. The catalysed reaction is L-tyrosyl-[protein] + ATP = O-(5'-adenylyl)-L-tyrosyl-[protein] + diphosphate. The enzyme catalyses L-histidyl-[protein] + UTP = N(tele)-(5'-uridylyl)-L-histidyl-[protein] + diphosphate. It catalyses the reaction L-seryl-[protein] + UTP = O-(5'-uridylyl)-L-seryl-[protein] + diphosphate. It carries out the reaction L-tyrosyl-[protein] + UTP = O-(5'-uridylyl)-L-tyrosyl-[protein] + diphosphate. Functionally, nucleotidyltransferase involved in the post-translational modification of proteins. It can catalyze the addition of adenosine monophosphate (AMP) or uridine monophosphate (UMP) to a protein, resulting in modifications known as AMPylation and UMPylation. This is Protein nucleotidyltransferase YdiU from Cereibacter sphaeroides (strain ATCC 17029 / ATH 2.4.9) (Rhodobacter sphaeroides).